A 690-amino-acid polypeptide reads, in one-letter code: Secreted LysM effector Vd5LysM (690 aa).

2 N-linked (GlcNAc...) asparagine glycosylation sites follow: Asn4 and Asn69. LysM domains are found at residues 203–248, 253–301, and 341–387; these read TQYT…SLCI, DTVT…TLCI, and RWYN…SYCV. 6 N-linked (GlcNAc...) asparagine glycosylation sites follow: Asn260, Asn295, Asn375, Asn410, Asn423, and Asn492. Positions 523–546 are disordered; sequence PATATTGDGGPTPPAPTHSGQPQD. One can recognise a LysM 4 domain in the interval 549 to 596; sequence TWHVVSSGDSCQSVADDAGISRDQFHDWNPAVGRDCSTNFWLGQAYCV. A compositionally biased stretch (low complexity) spans 606–619; it reads STVASSTTSSVTPG. The interval 606–636 is disordered; sequence STVASSTTSSVTPGPSKPEPPGPTHTGQPSD. The region spanning 639–686 is the LysM 5 domain; it reads EWDVVETGDTCGSLAESNDISLSQFFDWNPAVSRDCVANFWIGQAYCI.

This sequence belongs to the secreted LysM effector family.

In terms of biological role, might have a role in sequestration of chitin oligosaccharides (breakdown products of fungal cell walls that are released during invasion and act as triggers of host immunity) to dampen host defense. Does not play an important role during host colonization. This is Secreted LysM effector Vd5LysM from Verticillium dahliae (strain VdLs.17 / ATCC MYA-4575 / FGSC 10137) (Verticillium wilt).